The following is a 403-amino-acid chain: MALRSAQGDGPTSGHWDGGAEKADFNAKRKKKVAEIHQALNSDPTDVAALRRMAISEGGLLTDEIRRKVWPKLLNVNANDPPPISGKNLRQMSKDYQQVLLDVRRSLRRFPPGMPEEQREGLQEELIDIILLILERNPQLHYYQGYHDIVVTFLLVVGERLATSLVEKLSTHHLRDFMDPTMDNTKHILNYLMPIIDQVNPELHDFMQSAEVGTIFALSWLITWFGHVLSDFRHVVRLYDFFLACHPLMPIYFAAVIVLYREQEVLDCDCDMASVHHLLSQIPQDLPYETLISRAGDLFVQFPPSELAREAAAQQQAERTAASTFKDFELASAQQRPDMVLRQRFRGLLRPEDRTKDVLTKPRTNRFVKLAVMGLTVALGAAALAVVKSALEWAPKFQLQLFP.

Residues 1 to 25 (MALRSAQGDGPTSGHWDGGAEKADF) are disordered. The Rab-GAP TBC domain maps to 60–246 (LLTDEIRRKV…RLYDFFLACH (187 aa)). 2 consecutive transmembrane segments (helical) span residues 238–258 (LYDF…AVIV) and 367–387 (FVKL…LAVV).

As to quaternary structure, (Microbial infection) Directly interacts with the N-terminal amphipathic helix of hepatitis C virus (HCV) NS5A.

The protein resides in the membrane. Functionally, GTPase-activating protein (GAP) specific for Rab1 and Rab2 small GTPase families for which it can accelerate the intrinsic GTP hydrolysis rate by more than five orders of magnitude. Also shows GAP activity for RAB18 GTPase. Promotes RAB18 dissociation from the endoplasmic reticulum (ER) membrane into the cytosol, probably through stimulating RAB18 GTP-hydrolysis. Involved in maintaining endoplasmic reticulum structure. The protein is TBC1 domain family member 20 of Homo sapiens (Human).